Here is a 489-residue protein sequence, read N- to C-terminus: Corticosteroid-binding protein (489 aa).

This sequence to yeast FMS1.

Functionally, may be a flavoprotein with enzymatic activity. The sequence is that of Corticosteroid-binding protein (CBP1) from Candida albicans (strain SC5314 / ATCC MYA-2876) (Yeast).